Reading from the N-terminus, the 262-residue chain is Acyl-[acyl-carrier-protein]--UDP-N-acetylglucosamine O-acyltransferase (262 aa).

Belongs to the transferase hexapeptide repeat family. LpxA subfamily. In terms of assembly, homotrimer.

The protein resides in the cytoplasm. The catalysed reaction is a (3R)-hydroxyacyl-[ACP] + UDP-N-acetyl-alpha-D-glucosamine = a UDP-3-O-[(3R)-3-hydroxyacyl]-N-acetyl-alpha-D-glucosamine + holo-[ACP]. The protein operates within glycolipid biosynthesis; lipid IV(A) biosynthesis; lipid IV(A) from (3R)-3-hydroxytetradecanoyl-[acyl-carrier-protein] and UDP-N-acetyl-alpha-D-glucosamine: step 1/6. In terms of biological role, involved in the biosynthesis of lipid A, a phosphorylated glycolipid that anchors the lipopolysaccharide to the outer membrane of the cell. The sequence is that of Acyl-[acyl-carrier-protein]--UDP-N-acetylglucosamine O-acyltransferase from Burkholderia lata (strain ATCC 17760 / DSM 23089 / LMG 22485 / NCIMB 9086 / R18194 / 383).